The following is a 631-amino-acid chain: Leucine aminopeptidase 2-2 (631 aa).

Residues 140-142 and 265-270 each bind substrate; these read QCQ and PYGGME. His-294 is a Zn(2+) binding site. Glu-295 (proton acceptor) is an active-site residue. The Zn(2+) site is built by His-298 and Glu-317. The active-site Proton donor is the Tyr-395.

Belongs to the peptidase M1 family. Zn(2+) serves as cofactor.

The protein localises to the cytoplasm. The protein resides in the nucleus. The catalysed reaction is an epoxide + H2O = an ethanediol. Aminopeptidase that preferentially cleaves di- and tripeptides. Also has low epoxide hydrolase activity (in vitro). Can hydrolyze the epoxide leukotriene LTA(4) but it forms preferentially 5,6-dihydroxy-7,9,11,14-eicosatetraenoic acid rather than the cytokine leukotriene B(4) as the product compared to the homologous mammalian enzyme (in vitro). The sequence is that of Leucine aminopeptidase 2-2 from Meyerozyma guilliermondii (strain ATCC 6260 / CBS 566 / DSM 6381 / JCM 1539 / NBRC 10279 / NRRL Y-324) (Yeast).